The primary structure comprises 342 residues: MSGVPFPSRVIGDLDYSNLLNIGQEEAIRCVLNAYPNIGLEATNLGRARRIVQRALNDNGMDGNKVMLAYTSNLISSGLRDTFACLARENRIGAVVTTAGGVEEDVIKCLGDTLVGDFALNDHALRNNGLNRVGNLLVPNDNYRNFEDFFVPLLRRLHEQQRDSRWTTKTTPSQIIAEIGAALESVRPNDCGSSLIYWCYRNDIPVFSPAFTDGSMGDMIYFYNYSRKGLVVDPVPDVRRLRQLGCKSTNVGRITCIVLGAGLPKHHLLRNVQADAVVYVTTGSDADGCESSCNVMADRANGLLSPNCDVVRVHGDATIISPLLLLRSSDGKEKVGVREDGN.

Residues Ser72–Ser76, Thr98–Gly100, Glu104, Asp213, Thr282–Gly283, and Asp316–Ala317 contribute to the NAD(+) site.

This sequence belongs to the deoxyhypusine synthase family. In terms of assembly, heterotetramer formed by a homodimer of the non-catalytic regulatory subunit DHSp and a homodimer of the catalytic subunit DHSc where DHSc appears to bind spermidine and DHSp appears to bind NAD(+).

Its pathway is protein modification; eIF5A hypusination. Required for the activation and stability of deoxyhypusine synthase DHSc. Required for cell growth and survival. This is Deoxyhypusine synthase regulatory subunit from Trypanosoma brucei brucei (strain 927/4 GUTat10.1).